A 1034-amino-acid polypeptide reads, in one-letter code: FACT complex subunit spt-16 (1034 aa).

3 stretches are compositionally biased toward basic and acidic residues: residues 433–448, 463–481, and 493–503; these read EEQE…DQKK, TRNK…KELG, and SKQDGGTDEKK. Positions 433-511 are disordered; that stretch reads EEQENRETER…KKVKKSNVSY (79 aa). The stretch at 617 to 642 forms a coiled coil; that stretch reads LSTAFRQIKEMQKRFRTEEAEEREKD. Composition is skewed to acidic residues over residues 926–950 and 959–983; these read AESE…EADA and SDED…DSDE. The interval 926–1034 is disordered; sequence AESEGEDAGD…KAGPSHKRRK (109 aa). Residues 984 to 1020 show a composition bias toward basic and acidic residues; that stretch reads SEGKDWSDLEEEAAKADKRREVEDGGRDRDRDRDRKR. Basic residues predominate over residues 1021–1034; that stretch reads PSSSKAGPSHKRRK.

Belongs to the peptidase M24 family. SPT16 subfamily. As to quaternary structure, component of the FACT complex, a stable heterodimer of spt-16 and hmg-3 or hmg-4.

It is found in the nucleus. The protein resides in the chromosome. Its function is as follows. Component of the FACT complex, a general chromatin factor that acts to reorganize nucleosomes. The FACT complex is involved in multiple processes that require DNA as a template such as mRNA elongation, DNA replication and DNA repair. During transcription elongation the FACT complex acts as a histone chaperone that both destabilizes and restores nucleosomal structure. It facilitates the passage of RNA polymerase II and transcription by promoting the dissociation of one histone H2A-H2B dimer from the nucleosome, then subsequently promotes the reestablishment of the nucleosome following the passage of RNA polymerase II. The protein is FACT complex subunit spt-16 (spt-16) of Caenorhabditis briggsae.